A 418-amino-acid chain; its full sequence is Arrestin domain-containing protein 4 (418 aa).

2 consecutive short sequence motifs (PPxY motif) follow at residues 350–353 and 395–398; these read PPNY and PPLY.

This sequence belongs to the arrestin family. Interacts with ADRB2. Interacts (via PPxY motifs) with ITCH, NEDD4L and WWP2. Interacts with AVPR2. Identified in a complex containing at least ARRDC4, AVPR2 and HGS. Interacts with SLC11A2; controls the incorporation of SLC11A2 into extracellular vesicles through an ubiquitination-dependent mechanism. Interacts with TRIM65.

Its subcellular location is the early endosome. The protein resides in the cell membrane. It is found in the cytoplasmic vesicle. Its function is as follows. Functions as an adapter recruiting ubiquitin-protein ligases to their specific substrates. Plays a role in endocytosis of activated G protein-coupled receptors (GPCRs). Through an ubiquitination-dependent mechanism also plays a role in the incorporation of SLC11A2 into extracellular vesicles. May play a role in glucose uptake. Participates in innate immune response by promoting IFIH1/MDA5 activation through interaction with TRIM65. The polypeptide is Arrestin domain-containing protein 4 (ARRDC4) (Homo sapiens (Human)).